The following is a 128-amino-acid chain: 3-aminoacrylate deaminase RutC (128 aa).

It belongs to the RutC family.

It catalyses the reaction (Z)-3-aminoacrylate + H2O + H(+) = 3-oxopropanoate + NH4(+). In terms of biological role, involved in pyrimidine catabolism. Catalyzes the deamination of 3-aminoacrylate to malonic semialdehyde, a reaction that can also occur spontaneously. RutC may facilitate the reaction and modulate the metabolic fitness, rather than catalyzing essential functions. In Azorhizobium caulinodans (strain ATCC 43989 / DSM 5975 / JCM 20966 / LMG 6465 / NBRC 14845 / NCIMB 13405 / ORS 571), this protein is 3-aminoacrylate deaminase RutC.